Consider the following 125-residue polypeptide: Protein ApaG (125 aa).

The 123-residue stretch at 3–125 (TAVTEGIEVT…FPLVVPGTLN (123 aa)) folds into the ApaG domain.

This is Protein ApaG from Anaeromyxobacter sp. (strain K).